A 345-amino-acid chain; its full sequence is Dimethyladenosine transferase 1, mitochondrial (345 aa).

A mitochondrion-targeting transit peptide spans 1–27; the sequence is MAASGKLGTFRLPPLPTIREIIKLFGL. S-adenosyl-L-methionine is bound by residues leucine 38, glycine 63, glutamate 85, lysine 86, aspartate 111, valine 112, and asparagine 141.

The protein belongs to the class I-like SAM-binding methyltransferase superfamily. rRNA adenine N(6)-methyltransferase family. KsgA subfamily. Interacts with mitochondrial RNA polymerase POLRMT. Interacts with TFAM. Remains bound to the maturing mtSSU until the late stages of assembly. Ubiquitously expressed.

It is found in the mitochondrion. It carries out the reaction adenosine(N)/adenosine(N+1) in rRNA + 4 S-adenosyl-L-methionine = N(6)-dimethyladenosine(N)/N(6)-dimethyladenosine(N+1) in rRNA + 4 S-adenosyl-L-homocysteine + 4 H(+). Its function is as follows. Mitochondrial methyltransferase which uses S-adenosyl methionine to dimethylate two highly conserved adjacent adenosine residues (A1006 and A1007) within the loop of helix 45 at the 3-prime end of 12S rRNA, thereby regulating the assembly or stability of the small subunit of the mitochondrial ribosome. Also required for basal transcription of mitochondrial DNA, probably via its interaction with POLRMT and TFAM. Stimulates transcription independently of the methyltransferase activity. This chain is Dimethyladenosine transferase 1, mitochondrial (Tfb1m), found in Mus musculus (Mouse).